We begin with the raw amino-acid sequence, 173 residues long: T-cell surface glycoprotein CD3 delta chain (173 aa).

Residues 1–21 (MEHSGILASLILIAVLPQGSP) form the signal peptide. Residues 22 to 105 (FKIQVTEYED…CVELDSGTMA (84 aa)) lie on the Extracellular side of the membrane. A disulfide bridge connects residues Cys37 and Cys73. 3 N-linked (GlcNAc...) asparagine glycosylation sites follow: Asn38, Asn55, and Asn74. The chain crosses the membrane as a helical span at residues 106 to 126 (GVIFIDLIATLLLALGVYCFA). Over 127 to 173 (GHETGRPSGAAEVQALLKNEQLYQPLRDREDTQYSRLGGNWPRNKKS) the chain is Cytoplasmic. The ITAM domain maps to 138–166 (EVQALLKNEQLYQPLRDREDTQYSRLGGN). Residues Tyr149 and Tyr160 each carry the phosphotyrosine modification.

As to quaternary structure, the TCR-CD3 complex is composed of a CD3D/CD3E and a CD3G/CD3E heterodimers that preferentially associate with TCRalpha and TCRbeta, respectively, to form TCRalpha/CD3E/CD3G and TCRbeta/CD3G/CD3E trimers. In turn, the hexamer interacts with CD3Z homodimer to form the TCR-CD3 complex. Alternatively, TCRalpha and TCRbeta can be replaced by TCRgamma and TCRdelta. Interacts with coreceptors CD4 and CD8. Post-translationally, phosphorylated on Tyr residues after T-cell receptor triggering by LCK in association with CD4/CD8.

Its subcellular location is the membrane. In terms of biological role, part of the TCR-CD3 complex present on T-lymphocyte cell surface that plays an essential role in adaptive immune response. When antigen presenting cells (APCs) activate T-cell receptor (TCR), TCR-mediated signals are transmitted across the cell membrane by the CD3 chains CD3D, CD3E, CD3G and CD3Z. All CD3 chains contain immunoreceptor tyrosine-based activation motifs (ITAMs) in their cytoplasmic domain. Upon TCR engagement, these motifs become phosphorylated by Src family protein tyrosine kinases LCK and FYN, resulting in the activation of downstream signaling pathways. In addition of this role of signal transduction in T-cell activation, CD3D plays an essential role in thymocyte differentiation. Indeed, participates in correct intracellular TCR-CD3 complex assembly and surface expression. In absence of a functional TCR-CD3 complex, thymocytes are unable to differentiate properly. Interacts with CD4 and CD8 and thus serves to establish a functional link between the TCR and coreceptors CD4 and CD8, which is needed for activation and positive selection of CD4 or CD8 T-cells. This chain is T-cell surface glycoprotein CD3 delta chain (Cd3d), found in Mus musculus (Mouse).